Reading from the N-terminus, the 341-residue chain is Anthranilate phosphoribosyltransferase (341 aa).

Residues G82, 85–86 (GD), T90, 92–95 (NIST), 110–118 (KHGGRSVSS), and S122 contribute to the 5-phospho-alpha-D-ribose 1-diphosphate site. G82 contacts anthranilate. S94 is a binding site for Mg(2+). An anthranilate-binding site is contributed by R168. D227 and E228 together coordinate Mg(2+).

The protein belongs to the anthranilate phosphoribosyltransferase family. In terms of assembly, homodimer. Requires Mg(2+) as cofactor.

It catalyses the reaction N-(5-phospho-beta-D-ribosyl)anthranilate + diphosphate = 5-phospho-alpha-D-ribose 1-diphosphate + anthranilate. It participates in amino-acid biosynthesis; L-tryptophan biosynthesis; L-tryptophan from chorismate: step 2/5. Its function is as follows. Catalyzes the transfer of the phosphoribosyl group of 5-phosphorylribose-1-pyrophosphate (PRPP) to anthranilate to yield N-(5'-phosphoribosyl)-anthranilate (PRA). The sequence is that of Anthranilate phosphoribosyltransferase from Nitrosomonas eutropha (strain DSM 101675 / C91 / Nm57).